Here is a 297-residue protein sequence, read N- to C-terminus: Phosphatidylserine decarboxylase proenzyme (297 aa).

Active-site charge relay system; for autoendoproteolytic cleavage activity residues include Asp92, His149, and Ser254. Ser254 (schiff-base intermediate with substrate; via pyruvic acid; for decarboxylase activity) is an active-site residue. Ser254 carries the pyruvic acid (Ser); by autocatalysis modification.

It belongs to the phosphatidylserine decarboxylase family. PSD-B subfamily. Prokaryotic type I sub-subfamily. As to quaternary structure, heterodimer of a large membrane-associated beta subunit and a small pyruvoyl-containing alpha subunit. The cofactor is pyruvate. Post-translationally, is synthesized initially as an inactive proenzyme. Formation of the active enzyme involves a self-maturation process in which the active site pyruvoyl group is generated from an internal serine residue via an autocatalytic post-translational modification. Two non-identical subunits are generated from the proenzyme in this reaction, and the pyruvate is formed at the N-terminus of the alpha chain, which is derived from the carboxyl end of the proenzyme. The autoendoproteolytic cleavage occurs by a canonical serine protease mechanism, in which the side chain hydroxyl group of the serine supplies its oxygen atom to form the C-terminus of the beta chain, while the remainder of the serine residue undergoes an oxidative deamination to produce ammonia and the pyruvoyl prosthetic group on the alpha chain. During this reaction, the Ser that is part of the protease active site of the proenzyme becomes the pyruvoyl prosthetic group, which constitutes an essential element of the active site of the mature decarboxylase.

It localises to the cell membrane. The enzyme catalyses a 1,2-diacyl-sn-glycero-3-phospho-L-serine + H(+) = a 1,2-diacyl-sn-glycero-3-phosphoethanolamine + CO2. It participates in phospholipid metabolism; phosphatidylethanolamine biosynthesis; phosphatidylethanolamine from CDP-diacylglycerol: step 2/2. Catalyzes the formation of phosphatidylethanolamine (PtdEtn) from phosphatidylserine (PtdSer). The polypeptide is Phosphatidylserine decarboxylase proenzyme (Bordetella parapertussis (strain 12822 / ATCC BAA-587 / NCTC 13253)).